The primary structure comprises 73 residues: Large ribosomal subunit protein bL31 (73 aa).

The protein belongs to the bacterial ribosomal protein bL31 family. Type A subfamily. As to quaternary structure, part of the 50S ribosomal subunit.

In terms of biological role, binds the 23S rRNA. In Sinorhizobium fredii (strain NBRC 101917 / NGR234), this protein is Large ribosomal subunit protein bL31.